Here is a 492-residue protein sequence, read N- to C-terminus: Ketol-acid reductoisomerase (NADP(+)) (492 aa).

The KARI N-terminal Rossmann domain maps to 15–208; sequence AQLGKCRFMA…GGHRAGVLES (194 aa). Residues 45 to 48, arginine 68, arginine 76, serine 78, and 108 to 110 contribute to the NADP(+) site; these read CGAQ and DKQ. Residue histidine 132 is part of the active site. Glycine 158 lines the NADP(+) pocket. KARI C-terminal knotted domains are found at residues 209–344 and 345–485; these read SFVA…TAAQ and FEGK…MTDM. Mg(2+) is bound by residues aspartate 217, glutamate 221, glutamate 389, and glutamate 393. Serine 414 contacts substrate.

This sequence belongs to the ketol-acid reductoisomerase family. The cofactor is Mg(2+).

The catalysed reaction is (2R)-2,3-dihydroxy-3-methylbutanoate + NADP(+) = (2S)-2-acetolactate + NADPH + H(+). The enzyme catalyses (2R,3R)-2,3-dihydroxy-3-methylpentanoate + NADP(+) = (S)-2-ethyl-2-hydroxy-3-oxobutanoate + NADPH + H(+). The protein operates within amino-acid biosynthesis; L-isoleucine biosynthesis; L-isoleucine from 2-oxobutanoate: step 2/4. Its pathway is amino-acid biosynthesis; L-valine biosynthesis; L-valine from pyruvate: step 2/4. Involved in the biosynthesis of branched-chain amino acids (BCAA). Catalyzes an alkyl-migration followed by a ketol-acid reduction of (S)-2-acetolactate (S2AL) to yield (R)-2,3-dihydroxy-isovalerate. In the isomerase reaction, S2AL is rearranged via a Mg-dependent methyl migration to produce 3-hydroxy-3-methyl-2-ketobutyrate (HMKB). In the reductase reaction, this 2-ketoacid undergoes a metal-dependent reduction by NADPH to yield (R)-2,3-dihydroxy-isovalerate. In Erwinia tasmaniensis (strain DSM 17950 / CFBP 7177 / CIP 109463 / NCPPB 4357 / Et1/99), this protein is Ketol-acid reductoisomerase (NADP(+)).